The sequence spans 299 residues: Diaminopimelate epimerase (299 aa).

Substrate is bound by residues Asn-13, Gln-46, and Asn-66. Cys-75 functions as the Proton donor in the catalytic mechanism. Substrate-binding positions include 76-77 (GN), Asn-166, Asn-199, and 217-218 (ER). The Proton acceptor role is filled by Cys-226. 227–228 (GT) contacts substrate.

This sequence belongs to the diaminopimelate epimerase family. In terms of assembly, homodimer.

The protein localises to the cytoplasm. The enzyme catalyses (2S,6S)-2,6-diaminopimelate = meso-2,6-diaminopimelate. The protein operates within amino-acid biosynthesis; L-lysine biosynthesis via DAP pathway; DL-2,6-diaminopimelate from LL-2,6-diaminopimelate: step 1/1. Its function is as follows. Catalyzes the stereoinversion of LL-2,6-diaminopimelate (L,L-DAP) to meso-diaminopimelate (meso-DAP), a precursor of L-lysine and an essential component of the bacterial peptidoglycan. The sequence is that of Diaminopimelate epimerase from Paraburkholderia phytofirmans (strain DSM 17436 / LMG 22146 / PsJN) (Burkholderia phytofirmans).